A 467-amino-acid polypeptide reads, in one-letter code: UBX domain-containing protein 7 (467 aa).

Position 2 is an N-acetylalanine (A2). The region spanning 2-54 is the UBA domain; sequence AAHGGSAASSALKGLIQQFTAITGASESVGKHMLEACNNNLEMAVTMFLDGGG. The tract at residues 57–77 is disordered; sequence EEPSTSSASVSTVRPHTEEEV. A compositionally biased stretch (polar residues) spans 59–70; sequence PSTSSASVSTVR. Glycyl lysine isopeptide (Lys-Gly) (interchain with G-Cter in SUMO2) cross-links involve residues K84 and K112. A disordered region spans residues 240–260; that stretch reads GQLDGLSSSPPKKCARSESLI. Residues S256, S258, S263, and S266 each carry the phosphoserine modification. A ubiquitin-interacting motif (UIM) repeat occupies 263–282; the sequence is SEDSQLEAAIRASLQETHFD. Residues 281-364 form a disordered region; it reads FDSAQAKQDS…TATNHQGLPS (84 aa). Positions 330–344 are enriched in basic and acidic residues; that stretch reads HKDLGHRKEENRRPL. S373 bears the Phosphoserine mark. In terms of domain architecture, UBX spans 386-463; the sequence is VNGPKAQLML…GLCPQETVFV (78 aa).

In terms of assembly, interacts with neddylated CUL2, ubiquitinated HIF1A, and VCP/p97.

The protein localises to the nucleus. Ubiquitin-binding adapter that links a subset of NEDD8-associated cullin ring ligases (CRLs) to the segregase VCP/p97, to regulate turnover of their ubiquitination substrates. The protein is UBX domain-containing protein 7 (Ubxn7) of Mus musculus (Mouse).